The chain runs to 461 residues: Porin AaxA (461 aa).

The N-terminal stretch at 1-22 is a signal peptide; it reads MSFRSVLLTALLSLSFTTTMQA.

Belongs to the OprB family.

It is found in the cell outer membrane. Facilitates L-arginine uptake, as part of the AaxABC system. The arginine uptake by the bacterium in the macrophage may be a virulence factor against the host innate immune response. The chain is Porin AaxA (aaxA) from Chlamydia trachomatis serovar A (strain ATCC VR-571B / DSM 19440 / HAR-13).